The following is a 319-amino-acid chain: Thioredoxin reductase (319 aa).

FAD-binding positions include 11–14 (SGPA), 40–41 (VA), glutamine 45, asparagine 54, valine 87, cysteine 145, aspartate 288, and 295–297 (RQA). The cysteines at positions 142 and 145 are disulfide-linked.

It belongs to the class-II pyridine nucleotide-disulfide oxidoreductase family. Homodimer. FAD serves as cofactor.

It localises to the cytoplasm. It catalyses the reaction [thioredoxin]-dithiol + NADP(+) = [thioredoxin]-disulfide + NADPH + H(+). The protein is Thioredoxin reductase (TRR1) of Eremothecium gossypii (strain ATCC 10895 / CBS 109.51 / FGSC 9923 / NRRL Y-1056) (Yeast).